The chain runs to 212 residues: Urease accessory protein UreG 2 (212 aa).

11–18 (GPVGSGKM) lines the GTP pocket.

The protein belongs to the SIMIBI class G3E GTPase family. UreG subfamily. As to quaternary structure, homodimer. UreD, UreF and UreG form a complex that acts as a GTP-hydrolysis-dependent molecular chaperone, activating the urease apoprotein by helping to assemble the nickel containing metallocenter of UreC. The UreE protein probably delivers the nickel.

The protein localises to the cytoplasm. Its function is as follows. Facilitates the functional incorporation of the urease nickel metallocenter. This process requires GTP hydrolysis, probably effectuated by UreG. Disrupting the ure2 operon has no effect on urease activity, or pathogen survival in BALB/c mice when inoculated by gavage, but confers slightly enhanced resistance to low pH killing in vitro. The protein is Urease accessory protein UreG 2 of Brucella suis biovar 1 (strain 1330).